Consider the following 433-residue polypeptide: Eukaryotic translation initiation factor 3 subunit E (433 aa).

A PCI domain is found at 217–390 (FFNHGKGRDL…GHVVMGTQPL (174 aa)).

The protein belongs to the eIF-3 subunit E family. In terms of assembly, component of the eukaryotic translation initiation factor 3 (eIF-3) complex.

It localises to the cytoplasm. Functionally, component of the eukaryotic translation initiation factor 3 (eIF-3) complex, which is involved in protein synthesis of a specialized repertoire of mRNAs and, together with other initiation factors, stimulates binding of mRNA and methionyl-tRNAi to the 40S ribosome. The eIF-3 complex specifically targets and initiates translation of a subset of mRNAs involved in cell proliferation. In Anopheles gambiae (African malaria mosquito), this protein is Eukaryotic translation initiation factor 3 subunit E (eIF3-S6).